We begin with the raw amino-acid sequence, 214 residues long: Thiopurine S-methyltransferase (214 aa).

Residues tryptophan 10, leucine 44, glutamate 65, and arginine 122 each coordinate S-adenosyl-L-methionine.

This sequence belongs to the class I-like SAM-binding methyltransferase superfamily. TPMT family.

It localises to the cytoplasm. The catalysed reaction is S-adenosyl-L-methionine + a thiopurine = S-adenosyl-L-homocysteine + a thiopurine S-methylether.. The polypeptide is Thiopurine S-methyltransferase (Teredinibacter turnerae (strain ATCC 39867 / T7901)).